Reading from the N-terminus, the 249-residue chain is ATP synthase subunit a, chloroplastic (249 aa).

The next 5 helical transmembrane spans lie at 38-58 (GQVL…SVIA), 97-117 (VPFV…GALI), 136-156 (INTT…AGLS), 201-221 (LVVA…MMLL), and 222-242 (GLFT…AYIG).

The protein belongs to the ATPase A chain family. F-type ATPases have 2 components, CF(1) - the catalytic core - and CF(0) - the membrane proton channel. CF(1) has five subunits: alpha(3), beta(3), gamma(1), delta(1), epsilon(1). CF(0) has four main subunits: a, b, b' and c.

It is found in the plastid. The protein localises to the chloroplast thylakoid membrane. Its function is as follows. Key component of the proton channel; it plays a direct role in the translocation of protons across the membrane. The chain is ATP synthase subunit a, chloroplastic from Chlorokybus atmophyticus (Soil alga).